The primary structure comprises 486 residues: Bifunctional protein GlmU (486 aa).

The interval 1–236 is pyrophosphorylase; that stretch reads MTDQNLAIVV…SWLVDGINDR (236 aa). UDP-N-acetyl-alpha-D-glucosamine is bound by residues 11-14, K25, Q78, and 83-84; these read LAAG and GT. D109 serves as a coordination point for Mg(2+). 4 residues coordinate UDP-N-acetyl-alpha-D-glucosamine: G146, E161, N176, and N234. N234 is a binding site for Mg(2+). The segment at 237–257 is linker; the sequence is AQLSEAAAKLNALTVRAWQLA. The interval 258–486 is N-acetyltransferase; the sequence is GVTVQDPATT…ASNAAEESGE (229 aa). 2 residues coordinate UDP-N-acetyl-alpha-D-glucosamine: R339 and K357. The active-site Proton acceptor is the H369. Y372 and N383 together coordinate UDP-N-acetyl-alpha-D-glucosamine. Residues A386, 392–393, and A429 each bind acetyl-CoA; that span reads NY. A disordered region spans residues 459–486; that stretch reads RRPGTDAARAAQRNGAAEASNAAEESGE. A compositionally biased stretch (low complexity) spans 465 to 486; that stretch reads AARAAQRNGAAEASNAAEESGE.

The protein in the N-terminal section; belongs to the N-acetylglucosamine-1-phosphate uridyltransferase family. In the C-terminal section; belongs to the transferase hexapeptide repeat family. As to quaternary structure, homotrimer. Mg(2+) serves as cofactor.

The protein resides in the cytoplasm. The enzyme catalyses alpha-D-glucosamine 1-phosphate + acetyl-CoA = N-acetyl-alpha-D-glucosamine 1-phosphate + CoA + H(+). It carries out the reaction N-acetyl-alpha-D-glucosamine 1-phosphate + UTP + H(+) = UDP-N-acetyl-alpha-D-glucosamine + diphosphate. It participates in nucleotide-sugar biosynthesis; UDP-N-acetyl-alpha-D-glucosamine biosynthesis; N-acetyl-alpha-D-glucosamine 1-phosphate from alpha-D-glucosamine 6-phosphate (route II): step 2/2. Its pathway is nucleotide-sugar biosynthesis; UDP-N-acetyl-alpha-D-glucosamine biosynthesis; UDP-N-acetyl-alpha-D-glucosamine from N-acetyl-alpha-D-glucosamine 1-phosphate: step 1/1. The protein operates within bacterial outer membrane biogenesis; LPS lipid A biosynthesis. In terms of biological role, catalyzes the last two sequential reactions in the de novo biosynthetic pathway for UDP-N-acetylglucosamine (UDP-GlcNAc). The C-terminal domain catalyzes the transfer of acetyl group from acetyl coenzyme A to glucosamine-1-phosphate (GlcN-1-P) to produce N-acetylglucosamine-1-phosphate (GlcNAc-1-P), which is converted into UDP-GlcNAc by the transfer of uridine 5-monophosphate (from uridine 5-triphosphate), a reaction catalyzed by the N-terminal domain. This Leifsonia xyli subsp. xyli (strain CTCB07) protein is Bifunctional protein GlmU.